A 638-amino-acid polypeptide reads, in one-letter code: LEAF RUST 10 DISEASE-RESISTANCE LOCUS RECEPTOR-LIKE PROTEIN KINASE-like 2.1 (638 aa).

Positions 1-29 are cleaved as a signal peptide; the sequence is MINLSLYQTNSLSYTIIWMLFVIPSCVLS. The Extracellular portion of the chain corresponds to 30–264; it reads VDERQKHCSP…EHTCGKMGIG (235 aa). Asn69, Asn114, Asn136, Asn204, and Asn239 each carry an N-linked (GlcNAc...) asparagine glycan. A helical transmembrane segment spans residues 265 to 285; it reads IGLGCGFLGATLITVCLLCFF. Residues 286–638 lie on the Cytoplasmic side of the membrane; the sequence is FQKRRTSHHL…YTEVFIGSTS (353 aa). The 289-residue stretch at 321–609 folds into the Protein kinase domain; it reads KLFSHTLGKG…VLEVPPKPSI (289 aa). ATP contacts are provided by residues 327 to 335 and Lys349; that span reads LGKGGFGTV. Tyr393 carries the post-translational modification Phosphotyrosine. The active-site Proton acceptor is Asp444. Thr484 bears the Phosphothreonine mark.

Belongs to the protein kinase superfamily. Ser/Thr protein kinase family.

The protein localises to the membrane. It catalyses the reaction L-seryl-[protein] + ATP = O-phospho-L-seryl-[protein] + ADP + H(+). The catalysed reaction is L-threonyl-[protein] + ATP = O-phospho-L-threonyl-[protein] + ADP + H(+). This chain is LEAF RUST 10 DISEASE-RESISTANCE LOCUS RECEPTOR-LIKE PROTEIN KINASE-like 2.1, found in Arabidopsis thaliana (Mouse-ear cress).